The primary structure comprises 232 residues: Large ribosomal subunit protein uL1 (232 aa).

This sequence belongs to the universal ribosomal protein uL1 family. In terms of assembly, part of the 50S ribosomal subunit.

In terms of biological role, binds directly to 23S rRNA. The L1 stalk is quite mobile in the ribosome, and is involved in E site tRNA release. Functionally, protein L1 is also a translational repressor protein, it controls the translation of the L11 operon by binding to its mRNA. The chain is Large ribosomal subunit protein uL1 from Alkaliphilus oremlandii (strain OhILAs) (Clostridium oremlandii (strain OhILAs)).